The following is a 334-amino-acid chain: MEAAHFFEGTEKLLEVWFSRQQSDASQGSGDLRTIPRSEWDVLLKDVQCSIISVTKTDKQEAYVLSESSMFVSKRRFILKTCGTTLLLKALVPLLKLARDYSGFDSIQSFFYSRKNFMKPSHQGYPHRNFQEEIEFLNAIFPNGAAYCMGRMNSDCWYLYTLDFPESRVINQPDQTLEILMSELDPAVMDQFYMKDGVTAKDVTRESGIRDLIPGSVIDATLFNPCGYSMNGMKSDGTYWTIHITPEPEFSYVSFETNLSQTSYDDLIRKVVEVFKPGKFVTTLFVNQSSKCRTVLSSPQKIEGFKRLDCQSAMFNDYNFVFTSFAKKQQQQQS.

F7 provides a ligand contact to substrate. Catalysis depends on residues E8 and E11. E67 provides a ligand contact to substrate. S68 serves as the catalytic Schiff-base intermediate with substrate; via pyruvic acid. Pyruvic acid (Ser); by autocatalysis is present on S68. C82 (proton donor; for catalytic activity) is an active-site residue. F223 provides a ligand contact to substrate. Catalysis depends on proton acceptor; for processing activity residues S229 and H243. A substrate-binding site is contributed by E247. A Phosphoserine modification is found at S298.

This sequence belongs to the eukaryotic AdoMetDC family. In terms of assembly, heterotetramer of two alpha and two beta chains. It depends on pyruvate as a cofactor. Post-translationally, is synthesized initially as an inactive proenzyme. Formation of the active enzyme involves a self-maturation process in which the active site pyruvoyl group is generated from an internal serine residue via an autocatalytic post-translational modification. Two non-identical subunits are generated from the proenzyme in this reaction, and the pyruvate is formed at the N-terminus of the alpha chain, which is derived from the carboxyl end of the proenzyme. The post-translation cleavage follows an unusual pathway, termed non-hydrolytic serinolysis, in which the side chain hydroxyl group of the serine supplies its oxygen atom to form the C-terminus of the beta chain, while the remainder of the serine residue undergoes an oxidative deamination to produce ammonia and the pyruvoyl group blocking the N-terminus of the alpha chain.

It catalyses the reaction S-adenosyl-L-methionine + H(+) = S-adenosyl 3-(methylsulfanyl)propylamine + CO2. Its pathway is amine and polyamine biosynthesis; S-adenosylmethioninamine biosynthesis; S-adenosylmethioninamine from S-adenosyl-L-methionine: step 1/1. Functionally, essential for biosynthesis of the polyamines spermidine and spermine. Promotes maintenance and self-renewal of embryonic stem cells, by maintaining spermine levels. This is S-adenosylmethionine decarboxylase proenzyme (AMD1) from Mesocricetus auratus (Golden hamster).